A 256-amino-acid chain; its full sequence is Leucyl/phenylalanyl-tRNA--protein transferase (256 aa).

Belongs to the L/F-transferase family.

It localises to the cytoplasm. It catalyses the reaction N-terminal L-lysyl-[protein] + L-leucyl-tRNA(Leu) = N-terminal L-leucyl-L-lysyl-[protein] + tRNA(Leu) + H(+). It carries out the reaction N-terminal L-arginyl-[protein] + L-leucyl-tRNA(Leu) = N-terminal L-leucyl-L-arginyl-[protein] + tRNA(Leu) + H(+). The catalysed reaction is L-phenylalanyl-tRNA(Phe) + an N-terminal L-alpha-aminoacyl-[protein] = an N-terminal L-phenylalanyl-L-alpha-aminoacyl-[protein] + tRNA(Phe). In terms of biological role, functions in the N-end rule pathway of protein degradation where it conjugates Leu, Phe and, less efficiently, Met from aminoacyl-tRNAs to the N-termini of proteins containing an N-terminal arginine or lysine. The chain is Leucyl/phenylalanyl-tRNA--protein transferase from Hydrogenovibrio crunogenus (strain DSM 25203 / XCL-2) (Thiomicrospira crunogena).